The primary structure comprises 332 residues: MRNISMATLALTTVLSTGLFAADDLPGKGITVKPVQSTISEETFQTLLVSKALEKLGYTVDKPSEVDYNVGYTSIANGDATFTAVNWQPLHDDMYQAAGGDAKFYRQGVYVSGAAQGYLIDKKTAERYHITRLDQLKDPKLAKLFDTNGDGKADLTGCNPGWGCDSVINHQIQAYGLGDTVNHNQGNYAALIADTIARYKQGKSVIFFTWTPYWVSDVLVPGRDVVWLQVPFSSLPGKQKGTDTKLPNGANYGFPVNNMRIVANKDWAEKNPAAAKLFAIMKLPLADINAQNLRMHQGEASQQDIERHVNGWINAHQAQFDGWLNAARAAAK.

Residues 1–21 (MRNISMATLALTTVLSTGLFA) form the signal peptide.

In terms of assembly, the complex is composed of two ATP-binding proteins (OusV), two transmembrane proteins (OusW) and a solute-binding protein (OusX).

It localises to the periplasm. In terms of biological role, part of the OusB ABC transporter complex involved in glycine betaine and choline uptake. Binds glycine betaine. The polypeptide is Glycine betaine-binding periplasmic protein OusX (Dickeya dadantii (strain 3937) (Erwinia chrysanthemi (strain 3937))).